The primary structure comprises 289 residues: Diaminopimelate epimerase (289 aa).

Asn-17, Gln-47, and Asn-67 together coordinate substrate. The active-site Proton donor is the Cys-76. Residues 77–78 (GN), Asn-164, Asn-198, and 216–217 (ER) contribute to the substrate site. The active-site Proton acceptor is the Cys-225. 226 to 227 (GS) provides a ligand contact to substrate.

Belongs to the diaminopimelate epimerase family. In terms of assembly, homodimer.

The protein localises to the cytoplasm. The enzyme catalyses (2S,6S)-2,6-diaminopimelate = meso-2,6-diaminopimelate. Its pathway is amino-acid biosynthesis; L-lysine biosynthesis via DAP pathway; DL-2,6-diaminopimelate from LL-2,6-diaminopimelate: step 1/1. Functionally, catalyzes the stereoinversion of LL-2,6-diaminopimelate (L,L-DAP) to meso-diaminopimelate (meso-DAP), a precursor of L-lysine and an essential component of the bacterial peptidoglycan. This is Diaminopimelate epimerase from Bradyrhizobium sp. (strain BTAi1 / ATCC BAA-1182).